Reading from the N-terminus, the 316-residue chain is uncharacterized protein (316 aa).

Residues arginine 12 to valine 34 form a helical membrane-spanning segment.

The protein localises to the membrane. This is an uncharacterized protein from Treponema pallidum (strain Nichols).